The chain runs to 193 residues: MTVTTASGQWTFPVLFATLLVGSALVFPVGGLVWSAIASLAIAYLYYLVVEQHPHVGFALQLLALVVVARAKSWWRQACSGSWLASIVRRRKPTLTVDEYRSTLTYWDPVNKKWYIYTFAHGQRSTDLLIFRDENKRDVTPLVEPLLGPLQNFHGASPTPADLGFARLHVFRDGETSYQRQFDRHEPLVLTPH.

Helical transmembrane passes span 14 to 34 (VLFATLLVGSALVFPVGGLVW) and 48 to 68 (LVVEQHPHVGFALQLLALVVV).

It belongs to the IIV-6 357R family.

Its subcellular location is the membrane. This chain is Transmembrane protein 066L, found in Invertebrate iridescent virus 3 (IIV-3).